The primary structure comprises 489 residues: COX3 mRNA-specific translational activator PET494 (489 aa).

The protein resides in the mitochondrion inner membrane. Required for the expression of the mitochondrial gene for cytochrome c oxidase subunit III (COX3). In Saccharomyces cerevisiae (strain ATCC 204508 / S288c) (Baker's yeast), this protein is COX3 mRNA-specific translational activator PET494 (PET494).